A 91-amino-acid chain; its full sequence is Acylphosphatase (91 aa).

An Acylphosphatase-like domain is found at 5-91; sequence RAHVFVSGRV…EGVDGFEVRW (87 aa). Catalysis depends on residues R20 and N38.

Belongs to the acylphosphatase family.

It catalyses the reaction an acyl phosphate + H2O = a carboxylate + phosphate + H(+). The chain is Acylphosphatase (acyP) from Haloarcula marismortui (strain ATCC 43049 / DSM 3752 / JCM 8966 / VKM B-1809) (Halobacterium marismortui).